A 416-amino-acid chain; its full sequence is Squalene synthase (416 aa).

Helical transmembrane passes span 285–304 (VINF…NACY) and 386–406 (FISY…FLIA).

This sequence belongs to the phytoene/squalene synthase family. Mg(2+) serves as cofactor.

The protein resides in the endoplasmic reticulum membrane. The catalysed reaction is 2 (2E,6E)-farnesyl diphosphate + NADPH + H(+) = squalene + 2 diphosphate + NADP(+). It carries out the reaction 2 (2E,6E)-farnesyl diphosphate + NADH + H(+) = squalene + 2 diphosphate + NAD(+). Its pathway is terpene metabolism; lanosterol biosynthesis; lanosterol from farnesyl diphosphate: step 1/3. This chain is Squalene synthase (fdfT), found in Dictyostelium discoideum (Social amoeba).